Here is a 603-residue protein sequence, read N- to C-terminus: MANMRVKFPTLVLLLGIVFLMAVSIGIAYGEKNAIKNHERPQEREQEERDPRQQPRPRHQEEQEREHGREEERNREPSRGRSESEESREEEREQRREPSRGREQEQQPQHGRREEEEEWQPRRQRPQSRREEREQEQGSSSSSGRQSGYERREQREEREQQQEQDSRSESRRQRNPYYFSYERFQTLYKNRNGQIRVLERFDQRTNRLENLQNYRIVEFQSKPNTLILPKHSDADYILVVLNGRATITIVNPDKRQAYNLEHGDALRLPAGTTSYILNPDDNQNLRVVKLAIPINNPGNFYDFYPSSTKDQQSYFNGFSRNTLEATFNTRYEEIQRIILGNEDGQEDEEQSRGQEQSHQDQGVIVRVSKEQIQELRKHAQSSSGKGKPSESGPFNLRSDEPIYSNKFGNFYEITPDRNPQAQDLDISLTFIEINEGGLLLPHYNSKAIFVVVVDEGEGNYELVGIRDQERQQDEQEQEEVRRYNAKLSEGDIFVIPAGHPISINASSNLRLLGFGINADENQRNFLAGSEDNVIRQLDKEVKQLTFPGSVEDVERLIKNQQQSYFANAQPQQQQQREKEGRRGRRGLSFPFRSLFTKLLSTIM.

An N-terminal signal peptide occupies residues 1-30 (MANMRVKFPTLVLLLGIVFLMAVSIGIAYG). Over residues 36–105 (KNHERPQERE…REPSRGREQE (70 aa)) the composition is skewed to basic and acidic residues. 3 disordered regions span residues 36–177 (KNHE…RNPY), 343–363 (DGQEDEEQSRGQEQSHQDQGV), and 375–399 (LRKHAQSSSGKGKPSESGPFNLRSD). Low complexity predominate over residues 137–147 (QGSSSSSGRQS). The segment covering 148–172 (GYERREQREEREQQQEQDSRSESRR) has biased composition (basic and acidic residues). The 159-residue stretch at 177-335 (YYFSYERFQT…TFNTRYEEIQ (159 aa)) folds into the Cupin type-1 1 domain. Low complexity predominate over residues 381-393 (SSSGKGKPSESGP). A Cupin type-1 2 domain is found at 394–554 (FNLRSDEPIY…TFPGSVEDVE (161 aa)). An N-linked (GlcNAc...) asparagine glycan is attached at N504. Low complexity predominate over residues 564 to 574 (YFANAQPQQQQ). The interval 564 to 583 (YFANAQPQQQQQREKEGRRG) is disordered.

This sequence belongs to the 7S seed storage protein family. Component of globulins complexes which accumulate in seeds.

In terms of biological role, seed storage protein. Accumulates during seed development and is hydrolyzed after germination to provide a carbon and nitrogen source for the developing seedling. The chain is Conglutin beta 2 from Lupinus angustifolius (Narrow-leaved blue lupine).